Here is a 332-residue protein sequence, read N- to C-terminus: Fructose-1,6-bisphosphatase class 1 (332 aa).

Mg(2+)-binding residues include E89, D110, L112, and D113. Substrate is bound by residues D113–S116, N206, Y239, Y257–Y259, and K269. E275 provides a ligand contact to Mg(2+).

It belongs to the FBPase class 1 family. Homotetramer. It depends on Mg(2+) as a cofactor.

Its subcellular location is the cytoplasm. The catalysed reaction is beta-D-fructose 1,6-bisphosphate + H2O = beta-D-fructose 6-phosphate + phosphate. It functions in the pathway carbohydrate biosynthesis; gluconeogenesis. In Salmonella gallinarum (strain 287/91 / NCTC 13346), this protein is Fructose-1,6-bisphosphatase class 1.